Consider the following 164-residue polypeptide: NADH-quinone oxidoreductase subunit I (164 aa).

4Fe-4S ferredoxin-type domains are found at residues 55-85 (LRRY…IDAE) and 95-124 (TRYD…EGPN). Positions 65, 68, 71, 75, 104, 107, 110, and 114 each coordinate [4Fe-4S] cluster.

This sequence belongs to the complex I 23 kDa subunit family. In terms of assembly, NDH-1 is composed of 14 different subunits. Subunits NuoA, H, J, K, L, M, N constitute the membrane sector of the complex. [4Fe-4S] cluster is required as a cofactor.

It is found in the cell inner membrane. The enzyme catalyses a quinone + NADH + 5 H(+)(in) = a quinol + NAD(+) + 4 H(+)(out). In terms of biological role, NDH-1 shuttles electrons from NADH, via FMN and iron-sulfur (Fe-S) centers, to quinones in the respiratory chain. The immediate electron acceptor for the enzyme in this species is believed to be ubiquinone. Couples the redox reaction to proton translocation (for every two electrons transferred, four hydrogen ions are translocated across the cytoplasmic membrane), and thus conserves the redox energy in a proton gradient. This chain is NADH-quinone oxidoreductase subunit I, found in Ruegeria sp. (strain TM1040) (Silicibacter sp.).